Consider the following 382-residue polypeptide: Na(+)/H(+) antiporter NhaA (382 aa).

11 helical membrane passes run 13–33 (IGGI…NSPF), 58–78 (LLLW…GLEI), 94–114 (LVPA…FIFF), 124–144 (GWAI…SLLG), 153–173 (ILLT…IALF), 179–199 (SLLS…LNYF), 204–224 (ISVF…SGVH), 256–276 (VVFL…FVGL), 285–305 (VVLG…FLSL), 325–345 (VYGI…IGSL), and 357–377 (MVKI…FLVL).

The protein belongs to the NhaA Na(+)/H(+) (TC 2.A.33) antiporter family.

It is found in the cell inner membrane. It catalyses the reaction Na(+)(in) + 2 H(+)(out) = Na(+)(out) + 2 H(+)(in). Its function is as follows. Na(+)/H(+) antiporter that extrudes sodium in exchange for external protons. The protein is Na(+)/H(+) antiporter NhaA of Legionella pneumophila (strain Paris).